The chain runs to 106 residues: Large ribosomal subunit protein uL23 (106 aa).

This sequence belongs to the universal ribosomal protein uL23 family. Part of the 50S ribosomal subunit. Contacts protein L29, and trigger factor when it is bound to the ribosome.

Functionally, one of the early assembly proteins it binds 23S rRNA. One of the proteins that surrounds the polypeptide exit tunnel on the outside of the ribosome. Forms the main docking site for trigger factor binding to the ribosome. The chain is Large ribosomal subunit protein uL23 from Neisseria meningitidis serogroup A / serotype 4A (strain DSM 15465 / Z2491).